The following is a 470-amino-acid chain: E3 ubiquitin-protein ligase TRIM21 (470 aa).

An RING-type zinc finger spans residues 20 to 59; sequence CSICLDPMVEPMSIECGHCFCKECIFEVGKNGGSSCPECR. Zn(2+) contacts are provided by Cys96, His99, Cys118, and His124. The B box-type zinc finger occupies 96 to 127; sequence CMKHGEKLHLFCEEDGQALCWVCAQSGKHRDH. Residues 188 to 250 are a coiled coil; the sequence is LQNSLLAQEE…RGSELELLQE (63 aa). The B30.2/SPRY domain occupies 272–470; sequence DLTSTCPVPG…APLKLCPLKM (199 aa).

The protein belongs to the TRIM/RBCC family. In terms of assembly, homotrimer. Component of a SCF(SKP2)-like complex containing CUL1, SKP1, TRIM21 and SKP2. Interacts with CALR, CUL1, FBXW11, HSPA5, IKBKB, IRF3, SKP1 and VCP. Interacts with SKP2; the interaction with SKP2 does not depend on an intact F-box domain. Interacts (via N-terminus and C-terminus) with DCP2 (via N-terminus and C-terminus). Interacts (via C-terminus) with IRF8 (via C-terminus). Interacts with ULK1, BECN1 and with ATG8 family members, including GABARAP, GABARAPL1, GABARAPL2 and MAP1LC3C/LC3C. Interacts with TRIM21 and SQSTM1/sequestosome 1. Interacts with IRF3. Interacts (via the SPRY domain) with NMI (via coiled-coil domain); the interaction promotes 'Lys-63'-linked ubiquitination of NMI. Interacts with IFI35 and NMI; the interaction facilitates NMI-IFI35 complex formation. In terms of processing, autoubiquitinated; does not lead to its proteasomal degradation. Deubiquitinated by USP4; leading to its stabilization. Autoubiquitinated.

The protein resides in the cytoplasm. The protein localises to the cytoplasmic vesicle. It localises to the autophagosome. Its subcellular location is the nucleus. It is found in the P-body. The protein resides in the stress granule. The enzyme catalyses S-ubiquitinyl-[E2 ubiquitin-conjugating enzyme]-L-cysteine + [acceptor protein]-L-lysine = [E2 ubiquitin-conjugating enzyme]-L-cysteine + N(6)-ubiquitinyl-[acceptor protein]-L-lysine.. It participates in protein modification; protein ubiquitination. Functionally, E3 ubiquitin-protein ligase whose activity is dependent on E2 enzymes, UBE2D1, UBE2D2, UBE2E1 and UBE2E2. Forms a ubiquitin ligase complex in cooperation with the E2 UBE2D2 that is used not only for the ubiquitination of USP4 and IKBKB but also for its self-ubiquitination. Component of cullin-RING-based SCF (SKP1-CUL1-F-box protein) E3 ubiquitin-protein ligase complexes such as SCF(SKP2)-like complexes. A TRIM21-containing SCF(SKP2)-like complex is shown to mediate ubiquitination of CDKN1B ('Thr-187' phosphorylated-form), thereby promoting its degradation by the proteasome. Monoubiquitinates IKBKB that will negatively regulates Tax-induced NF-kappa-B signaling. Negatively regulates IFN-beta production post-pathogen recognition by catalyzing polyubiquitin-mediated degradation of IRF3. Mediates the ubiquitin-mediated proteasomal degradation of IgG1 heavy chain, which is linked to the VCP-mediated ER-associated degradation (ERAD) pathway. Promotes IRF8 ubiquitination, which enhanced the ability of IRF8 to stimulate cytokine genes transcription in macrophages. Plays a role in the regulation of the cell cycle progression. Enhances the decapping activity of DCP2. Exists as a ribonucleoprotein particle present in all mammalian cells studied and composed of a single polypeptide and one of four small RNA molecules. At least two isoforms are present in nucleated and red blood cells, and tissue specific differences in RO/SSA proteins have been identified. The common feature of these proteins is their ability to bind HY RNAs.2. Involved in the regulation of innate immunity and the inflammatory response in response to IFNG/IFN-gamma. Organizes autophagic machinery by serving as a platform for the assembly of ULK1, Beclin 1/BECN1 and ATG8 family members and recognizes specific autophagy targets, thus coordinating target recognition with assembly of the autophagic apparatus and initiation of autophagy. Also regulates autophagy through FIP200/RB1CC1 ubiquitination and subsequent decreased protein stability. Represses the innate antiviral response by facilitating the formation of the NMI-IFI35 complex through 'Lys-63'-linked ubiquitination of NMI. During viral infection, promotes cell pyroptosis by mediating 'Lys-6'-linked ubiquitination of ISG12a/IFI27, facilitating its translocation into the mitochondria and subsequent CASP3 activation. When up-regulated through the IFN/JAK/STAT signaling pathway, promotes 'Lys-27'-linked ubiquitination of MAVS, leading to the recruitment of TBK1 and up-regulation of innate immunity. Mediates 'Lys-63'-linked polyubiquitination of G3BP1 in response to heat shock, leading to stress granule disassembly. The protein is E3 ubiquitin-protein ligase TRIM21 (Trim21) of Mus musculus (Mouse).